Reading from the N-terminus, the 400-residue chain is MRASKSDRFLMSSWVKLLFVAVIMYICSAVVPMAATYEGLGFPCYFNNLVNYSALNLTVRNSAKHLTPTLFLEKPEMLVYIFWTFIVDGIAIVYYCLAAVAVYRAKHVHATTMMSMQSWIALLGSHSVLYVAILRMWSMQLFIHVLSYKHVLMAAFVYCIHFCISFAHIQSLITCNSAQWEIPLLEQHVPDNTMMESLLTRWKPVCVNLYLSTTALEMLLFSLSTMMAVGNSFYVLVSDAIFGAVNMFLALTVVWYINTEFFLVKFMRRQVGFYVGVFVGYLILLLPVIRYENAFVQANLHYIVAINISCIPILCILAIVIRVIRSDWGLCTPSAAYMPLATSAPTVDRTPTVHQKPPPLPAKTRARAKVKDISTPAPRTQYQSDHESDSEIDETQMIFI.

The Intravirion portion of the chain corresponds to 1 to 16 (MRASKSDRFLMSSWVK). The helical transmembrane segment at 17-37 (LLFVAVIMYICSAVVPMAATY) threads the bilayer. Over 38-76 (EGLGFPCYFNNLVNYSALNLTVRNSAKHLTPTLFLEKPE) the chain is Virion surface. Residues 77–97 (MLVYIFWTFIVDGIAIVYYCL) form a helical membrane-spanning segment. Residues 98–113 (AAVAVYRAKHVHATTM) are Intravirion-facing. Residues 114–134 (MSMQSWIALLGSHSVLYVAIL) form a helical membrane-spanning segment. Topologically, residues 135 to 152 (RMWSMQLFIHVLSYKHVL) are virion surface. Residues 153-173 (MAAFVYCIHFCISFAHIQSLI) traverse the membrane as a helical segment. The Intravirion segment spans residues 174–208 (TCNSAQWEIPLLEQHVPDNTMMESLLTRWKPVCVN). Residues 209–229 (LYLSTTALEMLLFSLSTMMAV) form a helical membrane-spanning segment. Over 230–234 (GNSFY) the chain is Virion surface. Residues 235–255 (VLVSDAIFGAVNMFLALTVVW) form a helical membrane-spanning segment. At 256–270 (YINTEFFLVKFMRRQ) the chain is on the intravirion side. Residues 271–291 (VGFYVGVFVGYLILLLPVIRY) form a helical membrane-spanning segment. At 292-300 (ENAFVQANL) the chain is on the virion surface side. Residues 301 to 321 (HYIVAINISCIPILCILAIVI) form a helical membrane-spanning segment. Topologically, residues 322 to 400 (RVIRSDWGLC…EIDETQMIFI (79 aa)) are intravirion. A disordered region spans residues 348–394 (DRTPTVHQKPPPLPAKTRARAKVKDISTPAPRTQYQSDHESDSEIDE).

Belongs to the herpesviridae glycoprotein M family. As to quaternary structure, interacts (via N-terminus) with gN (via N-terminus). The gM-gN heterodimer forms the gCII complex. Post-translationally, N-glycosylated.

The protein localises to the virion membrane. The protein resides in the host Golgi apparatus. Its subcellular location is the host trans-Golgi network. It is found in the host endosome membrane. It localises to the host nucleus inner membrane. Functionally, envelope glycoprotein important for virion assembly and egress. Plays a role in the correct incorporation of gH-gL into virion membrane. Directs the glycoprotein N (gN) to the host trans-Golgi network. This chain is Envelope glycoprotein M, found in Homo sapiens (Human).